The following is a 211-amino-acid chain: Envelope glycoprotein (211 aa).

The Extracellular portion of the chain corresponds to 1–151; the sequence is QFKRRAKYKR…FNKSPWFTTL (151 aa). The segment at 13–33 is fusion peptide; that stretch reads VSLTLALLLGGLTMGGIAAGV. 2 coiled-coil regions span residues 41–90 and 100–136; these read VATQ…LLFL and KEEC…SQQG. The segment at 79-95 is immunosuppression; sequence LQNRRGLDLLFLKEGGL. The CX6CC motif lies at 96–104; sequence CAALKEECC. Residues 152–172 form a helical membrane-spanning segment; it reads ISTIMGPLIILLLILLFGPCI. A lipid anchor (S-palmitoyl cysteine; by host) is attached at cysteine 171. Residues 173–211 are Cytoplasmic-facing; it reads LNRLVQFIKDRISVVQALVLTQQYHQLKSIDPEKVESRE. Positions 196-199 match the YXXL motif; contains endocytosis signal motif; sequence YHQL.

The mature envelope protein (Env) consists of a trimer of SU-TM heterodimers attached by a labile interchain disulfide bond. In terms of processing, specific enzymatic cleavages in vivo yield mature proteins. Envelope glycoproteins are synthesized as an inactive precursor that is N-glycosylated and processed likely by host cell furin or by a furin-like protease in the Golgi to yield the mature SU and TM proteins. The cleavage site between SU and TM requires the minimal sequence [KR]-X-[KR]-R. The R-peptide is released from the C-terminus of the cytoplasmic tail of the TM protein upon particle formation as a result of proteolytic cleavage by the viral protease. Cleavage of this peptide is required for TM to become fusogenic. The CXXC motif is highly conserved across a broad range of retroviral envelope proteins. It is thought to participate in the formation of a labile disulfide bond possibly with the CX6CC motif present in the transmembrane protein. Isomerization of the intersubunit disulfide bond to an SU intrachain disulfide bond is thought to occur upon receptor recognition in order to allow membrane fusion. Post-translationally, the transmembrane protein is palmitoylated. In terms of processing, the R-peptide is palmitoylated.

It is found in the virion membrane. The protein localises to the host cell membrane. In terms of biological role, the surface protein (SU) attaches the virus to the host cell by binding to its receptor. This interaction triggers the refolding of the transmembrane protein (TM) and is thought to activate its fusogenic potential by unmasking its fusion peptide. Fusion occurs at the host cell plasma membrane. The transmembrane protein (TM) acts as a class I viral fusion protein. Under the current model, the protein has at least 3 conformational states: pre-fusion native state, pre-hairpin intermediate state, and post-fusion hairpin state. During viral and target cell membrane fusion, the coiled coil regions (heptad repeats) assume a trimer-of-hairpins structure, positioning the fusion peptide in close proximity to the C-terminal region of the ectodomain. The formation of this structure appears to drive apposition and subsequent fusion of viral and target cell membranes. Membranes fusion leads to delivery of the nucleocapsid into the cytoplasm. This is Envelope glycoprotein (env) from Mus musculus (Mouse).